The chain runs to 871 residues: Pentatricopeptide repeat-containing protein DOT4, chloroplastic (871 aa).

A chloroplast-targeting transit peptide spans 1 to 28 (MAMLVTNLSSSSFCFFSSPHLQNQKEIR). PPR repeat units follow at residues 60–94 (SVTDANTQLRRFCESGNLENAVKLLCVSGKWDIDP), 96–127 (TLCSVLQLCADSKSLKDGKEVDNFIRGNGFVI), 128–158 (DSNLGSKLSLMYTNCGDLKEASRVFDEVKIE), 159–193 (KALFWNILMNELAKSGDFSGSIGLFKKMMSSGVEM), 194–228 (DSYTFSCVSKSFSSLRSVHGGEQLHGFILKSGFGE), 229–259 (RNSVGNSLVAFYLKNQRVDSARKVFDEMTER), 260–294 (DVISWNSIINGYVSNGLAEKGLSVFVQMLVSGIEI), 295–329 (DLATIVSVFAGCADSRLISLGRAVHSIGVKACFSR), 330–360 (EDRFCNTLLDMYSKCGDLDSAKAVFREMSDR), 361–395 (SVVSYTSMIAGYAREGLAGEAVKLFEEMEEEGISP), 396–430 (DVYTVTAVLNCCARYRLLDEGKRVHEWIKENDLGF), 431–465 (DIFVSNALMDMYAKCGSMQEAELVFSEMRVKDIIS), 466–497 (WNTIIGGYSKNCYANEALSLFNLLLEEKRFSP), 498–532 (DERTVACVLPACASLSAFDKGREIHGYIMRNGYFS), 533–563 (DRHVANSLVDMYAKCGALLLAHMLFDDIASK), 564–598 (DLVSWTVMIAGYGMHGFGKEAIALFNQMRQAGIEA), 599–629 (DEISFVSLLYACSHSGLVDEGWRFFNIMRHE), and 635–665 (TVEHYACIVDMLARTGDLIKAYRFIENMPIP). Residues 670–745 (IWGALLCGCR…NPGCSWIEIK (76 aa)) are type E motif. The type E(+) motif stretch occupies residues 746–776 (GRVNIFVAGDSSNPETENIEAFLRKVRARMI). The segment at 777 to 871 (EEGYSPLTKY…DGHCSCRGFW (95 aa)) is type DYW motif.

Belongs to the PPR family. PCMP-H subfamily. Zn(2+) serves as cofactor. Weakly expressed in leaves.

It is found in the plastid. Its subcellular location is the chloroplast. Functionally, plays a major role in single RNA editing events in chloroplasts. Acts as a site-recognition transacting factor involved in the edition of the unique site (corresponding to cytidine-488) of rpoC1, which is a plastid-encoded subunit of the chloroplast DNA-directed RNA polymerase. May provide the catalytic activity for editing site conversion. Involved in leaf vasculature patterning. The protein is Pentatricopeptide repeat-containing protein DOT4, chloroplastic of Arabidopsis thaliana (Mouse-ear cress).